A 298-amino-acid chain; its full sequence is UDP-N-acetylenolpyruvoylglucosamine reductase (298 aa).

The 180-residue stretch at 27 to 206 (VGGPAQRLYR…QQQIRRLLRQ (180 aa)) folds into the FAD-binding PCMH-type domain. R171 is an active-site residue. S220 serves as the catalytic Proton donor. The active site involves E290.

The protein belongs to the MurB family. Requires FAD as cofactor.

It is found in the cytoplasm. The enzyme catalyses UDP-N-acetyl-alpha-D-muramate + NADP(+) = UDP-N-acetyl-3-O-(1-carboxyvinyl)-alpha-D-glucosamine + NADPH + H(+). The protein operates within cell wall biogenesis; peptidoglycan biosynthesis. Its function is as follows. Cell wall formation. This chain is UDP-N-acetylenolpyruvoylglucosamine reductase, found in Nitrosococcus oceani (strain ATCC 19707 / BCRC 17464 / JCM 30415 / NCIMB 11848 / C-107).